A 1327-amino-acid polypeptide reads, in one-letter code: Myb-like protein O (1327 aa).

Over residues asparagine 131–lysine 142 the composition is skewed to low complexity. Disordered stretches follow at residues asparagine 131–asparagine 153, glutamate 263–serine 390, proline 504–serine 668, and lysine 717–aspartate 770. Residues glutamate 263 to asparagine 283 show a composition bias toward acidic residues. Residues tyrosine 322–asparagine 353 are compositionally biased toward low complexity. The segment covering aspartate 356 to aspartate 374 has biased composition (acidic residues). Positions serine 511–lysine 532 are enriched in low complexity. Residues asparagine 533–glutamate 542 show a composition bias toward basic residues. Residues lysine 543–arginine 554 show a composition bias toward basic and acidic residues. Residues lysine 555 to threonine 577 are compositionally biased toward basic residues. Over residues serine 585–glutamate 606 the composition is skewed to acidic residues. The span at glycine 607 to valine 619 shows a compositional bias: gly residues. Residues serine 624 to serine 633 are compositionally biased toward acidic residues. Composition is skewed to low complexity over residues histidine 646 to serine 668 and glutamine 722 to isoleucine 732. The segment covering asparagine 754 to aspartate 770 has biased composition (acidic residues). The 57-residue stretch at asparagine 897–serine 953 folds into the HTH myb-type domain. The H-T-H motif DNA-binding region spans tryptophan 925–leucine 949. Positions lysine 959–glutamate 1010 constitute a Myb-like 1 domain. Low complexity-rich tracts occupy residues asparagine 1061–asparagine 1118 and proline 1144–proline 1160. 2 disordered regions span residues asparagine 1061–glycine 1122 and proline 1144–isoleucine 1168. One can recognise a Myb-like 2 domain in the interval lysine 1268–leucine 1316.

It localises to the nucleus. This Dictyostelium discoideum (Social amoeba) protein is Myb-like protein O (mybO).